The sequence spans 1083 residues: Protein HOS4 (1083 aa).

Disordered regions lie at residues 1-233 (MNET…RKLV) and 267-328 (SSLF…YRDS). A phosphoserine mark is found at serine 14 and serine 16. The segment covering 24–62 (TRREELEKISKQETSEEEDTAGKHEQRETLSEEVSDKFP) has biased composition (basic and acidic residues). The residue at position 37 (threonine 37) is a Phosphothreonine. Serine 67 is modified (phosphoserine). Residues 67 to 85 (SFRSQTTSVHQATQNNLNA) are compositionally biased toward polar residues. Residues 86-118 (KESEDLAHKNDASSHEGEVNGDSRPDDVPETNE) are compositionally biased toward basic and acidic residues. The span at 135–149 (PNVRNVDIQNHQPFS) shows a compositional bias: polar residues. The span at 151–166 (DQLRAMLKEPKRKTVD) shows a compositional bias: basic and acidic residues. A compositionally biased stretch (acidic residues) spans 167–185 (DFIEEEGLGAVEEEDLSDE). The span at 186–207 (VLEKNTTEPENVEKDIEYSDSD) shows a compositional bias: basic and acidic residues. Over residues 277–293 (VKETNNNLSNMNSSPAQ) the composition is skewed to polar residues. Residue serine 290 is modified to Phosphoserine. A compositionally biased stretch (low complexity) spans 300–310 (VSRSNDSNKSS). The segment covering 314 to 323 (VSKRPKQKKG) has biased composition (basic residues). ANK repeat units follow at residues 329–359 (GGRTRLQIACDKGKYDVVKKMIEEGGYDIND), 363–392 (AGNTALHEAALQGHIEIVELLIENGADVNI), and 398–427 (FGDTPLIDASANGHLDVVKYLLKNGADPTI). The disordered stretch occupies residues 472-516 (AGIHNDKSKNGNNAHTIDQPPFDNTTKAKNEKAADSPSMASNIDE). Positions 481–496 (NGNNAHTIDQPPFDNT) are enriched in polar residues. Position 507 is a phosphoserine (serine 507). ANK repeat units lie at residues 532 to 561 (AGKEKLFKASKEGHLPYVGTYVENGGKIDL) and 593 to 622 (NKTSALMVAVGRGHLGTVKLLLEAGADPTK). Disordered stretches follow at residues 661 to 742 (HSED…DDNE) and 762 to 790 (DEEKLKSISPLSMEPHSPKKAKSVEISKI). The segment covering 665-675 (NNDDDDDDDNN) has biased composition (acidic residues). Serine 698 carries the post-translational modification Phosphoserine. The residue at position 700 (threonine 700) is a Phosphothreonine. Basic and acidic residues predominate over residues 721 to 740 (NNDRDVKESTTSDSRKRLDD). Phosphoserine is present on serine 778.

Identified in the Set3C complex with HOS2, HST1, SNT1, SIF2, CPR1 and SET3.

Unknown. Component of the Set3C complex, which is required to repress early/middle sporulation genes during meiosis. The chain is Protein HOS4 (HOS4) from Saccharomyces cerevisiae (strain ATCC 204508 / S288c) (Baker's yeast).